A 783-amino-acid polypeptide reads, in one-letter code: Probable phosphoketolase (783 aa).

This sequence belongs to the XFP family. It depends on thiamine diphosphate as a cofactor.

The sequence is that of Probable phosphoketolase from Rhodopseudomonas palustris (strain TIE-1).